Consider the following 314-residue polypeptide: Serine/threonine-protein phosphatase SIT4 (314 aa).

Mn(2+) contacts are provided by Asp53, His55, Asp85, and Asn117. His118 functions as the Proton donor in the catalytic mechanism. The Mn(2+) site is built by His167 and His241.

This sequence belongs to the PPP phosphatase family. PP-6 (PP-V) subfamily. Interacts with MDS3. Requires Mn(2+) as cofactor.

Its subcellular location is the cytoplasm. The catalysed reaction is O-phospho-L-seryl-[protein] + H2O = L-seryl-[protein] + phosphate. The enzyme catalyses O-phospho-L-threonyl-[protein] + H2O = L-threonyl-[protein] + phosphate. In terms of biological role, serine/threonine protein phosphatase which is involved in the dephosphorylation of the large subunit of RNA polymerase II. Is required in late G1 for normal G1 cyclin expression, bud initiation and expression of certain genes that are periodically expressed during late G1. Plays a role during hyphal growth through the regulation of cell wall biogenesis, osmosensing and protein translation. Involved in virulence in a mouse systemic infection model. This Candida albicans (strain SC5314 / ATCC MYA-2876) (Yeast) protein is Serine/threonine-protein phosphatase SIT4 (SIT4).